Here is a 359-residue protein sequence, read N- to C-terminus: Proton-gated ion channel (359 aa).

The N-terminal stretch at Met1–Gly43 is a signal peptide. The Periplasmic segment spans residues Gln44 to Gln235. A helical membrane pass occupies residues Tyr236–Phe258. Residues Trp259–Thr261 lie on the Cytoplasmic side of the membrane. A helical transmembrane segment spans residues Ser262–Thr286. Topologically, residues Asn287 to Met294 are periplasmic. The helical transmembrane segment at Thr295–Val323 threads the bilayer. Topologically, residues Glu324–Gln326 are cytoplasmic. A helical membrane pass occupies residues Pro327–Phe359.

The protein belongs to the ligand-gated ion channel (TC 1.A.9) family. In terms of assembly, homopentamer.

It localises to the cell inner membrane. Its activity is regulated as follows. Tetraethylammonium (TEA) and tetrabutylammonium (TBA) inhibit the proton-activated currents in a dose- and voltage-dependent manner in vitro, whereas the blocker of acid sensing ion channels, amiloride, has no effect. Channel current of GLIC can be inhibited by inhaled and intravenous general anesthetics at and below concentrations used clinically. Ion conduction is also inhibited by lidocaine and by divalent transition metal ions such as cadmium ions. Functionally, cationic channel with similar permeabilities for Na(+) and K(+), that is activated by an increase of the proton concentration on the extracellular side. Displays no permeability for chloride ions. Shows slow kinetics of activation, no desensitization and a single channel conductance of 8 pS. Might contribute to adaptation to external pH change. The chain is Proton-gated ion channel (glvI) from Gloeobacter violaceus (strain ATCC 29082 / PCC 7421).